Reading from the N-terminus, the 313-residue chain is tRNA dimethylallyltransferase (313 aa).

11–18 (GPTAAGKS) is a binding site for ATP. 13 to 18 (TAAGKS) is a substrate binding site. Interaction with substrate tRNA regions lie at residues 36 to 39 (DSAT), 160 to 164 (QRIQR), and 244 to 249 (RCVGYR).

The protein belongs to the IPP transferase family. In terms of assembly, monomer. Requires Mg(2+) as cofactor.

The catalysed reaction is adenosine(37) in tRNA + dimethylallyl diphosphate = N(6)-dimethylallyladenosine(37) in tRNA + diphosphate. Its function is as follows. Catalyzes the transfer of a dimethylallyl group onto the adenine at position 37 in tRNAs that read codons beginning with uridine, leading to the formation of N6-(dimethylallyl)adenosine (i(6)A). The protein is tRNA dimethylallyltransferase of Bordetella parapertussis (strain 12822 / ATCC BAA-587 / NCTC 13253).